The following is a 303-amino-acid chain: Bidirectional sugar transporter SWEET14 (303 aa).

Residues 1 to 9 lie on the Extracellular side of the membrane; that stretch reads MAGMSLQHP. The helical transmembrane segment at 10–30 threads the bilayer; it reads WAFAFGLLGNIISFMTYLAPL. The 86-residue stretch at 13–98 folds into the MtN3/slv 1 domain; it reads AFGLLGNIIS…AVYLVYAPKK (86 aa). Topologically, residues 31–44 are cytoplasmic; sequence PTFYRIYKSKSTQG. The helical transmembrane segment at 45–65 threads the bilayer; sequence FQSVPYVVALFSAMLWIYYAL. The Extracellular portion of the chain corresponds to 66–72; that stretch reads LKSDECL. The helical transmembrane segment at 73–93 threads the bilayer; it reads LITINSAGCVIETIYIAVYLV. Over 94 to 105 the chain is Cytoplasmic; it reads YAPKKAKMFTAK. A helical membrane pass occupies residues 106–126; it reads LLLLVNVGVFGLILLLTLLLS. The Extracellular portion of the chain corresponds to 127-133; the sequence is AGDRRIV. A helical transmembrane segment spans residues 134–154; sequence VLGWVCVGFSVSVFVAPLSII. Positions 134–217 constitute a MtN3/slv 2 domain; that stretch reads VLGWVCVGFS…MGLYAMYRNS (84 aa). Over 155-167 the chain is Cytoplasmic; that stretch reads RLVVRTKSVEFMP. A helical membrane pass occupies residues 168 to 188; the sequence is FSLSFSLTISAVVWFLYGLLI. Residues 189–192 are Extracellular-facing; it reads KDKY. A helical transmembrane segment spans residues 193 to 213; sequence VALPNVLGFSFGVIQMGLYAM. Over 214–303 the chain is Cytoplasmic; the sequence is YRNSTPKAVL…AGAGEKKVAA (90 aa). A disordered region spans residues 266–290; the sequence is HPVDVESPPAEAPPQEDDKAAAATA.

This sequence belongs to the SWEET sugar transporter family. Forms homooligomers and/or heterooligomers.

It localises to the cell membrane. Mediates both low-affinity uptake and efflux of sugar across the plasma membrane. This chain is Bidirectional sugar transporter SWEET14 (SWEET14), found in Oryza sativa subsp. indica (Rice).